Consider the following 181-residue polypeptide: Germinal center-associated signaling and motility protein (181 aa).

Serine 102 bears the Phosphoserine mark. Basic and acidic residues predominate over residues 117–128; that stretch reads AERHKESSRGTE. The tract at residues 117–181 is disordered; that stretch reads AERHKESSRG…PYETHFSYPQ (65 aa). At tyrosine 150 the chain carries Phosphotyrosine.

Interacts with ACTB and MYH2; the interaction with MYH2 is increased by IL6-induced phosphorylation. Interacts (via C-terminus) with ARHGEF11 (via DH domain). Interacts with ARHGEF12. Interacts with SYK; the interaction increases after B-cell receptor stimulation, resulting in enhanced SYK autophosphorylation and activity. Post-translationally, phosphorylation on tyrosine residues can be induced by IL6. Phosphorylation is mediated by LYN. Targeted by the ubiquitin E3 ligase subunit FBXO10 to mediate its ubiquitination and degradation. Highly expressed in normal germinal center (GC) B-cells. Expressed in spleen and, to a lesser extent, bone marrow.

It localises to the cytoplasm. It is found in the cell membrane. In terms of biological role, involved in the negative regulation of lymphocyte motility. It mediates the migration-inhibitory effects of IL6. Serves as a positive regulator of the RhoA signaling pathway. Enhancement of RhoA activation results in inhibition of lymphocyte and lymphoma cell motility by activation of its downstream effector ROCK. Is a regulator of B-cell receptor signaling, that acts through SYK kinase activation. The polypeptide is Germinal center-associated signaling and motility protein (Gcsam) (Mus musculus (Mouse)).